A 573-amino-acid polypeptide reads, in one-letter code: Methionine--tRNA ligase (573 aa).

The short motif at 10 to 20 (PYVNSVPHLGN) is the 'HIGH' region element. Zn(2+) is bound by residues cysteine 143, cysteine 146, cysteine 156, and cysteine 159. The 'KMSKS' region signature appears at 333–337 (KFSKS). Lysine 336 is an ATP binding site.

This sequence belongs to the class-I aminoacyl-tRNA synthetase family. MetG type 1 subfamily. Requires Zn(2+) as cofactor.

The protein resides in the cytoplasm. It carries out the reaction tRNA(Met) + L-methionine + ATP = L-methionyl-tRNA(Met) + AMP + diphosphate. Is required not only for elongation of protein synthesis but also for the initiation of all mRNA translation through initiator tRNA(fMet) aminoacylation. The polypeptide is Methionine--tRNA ligase (Saccharolobus solfataricus (strain ATCC 35092 / DSM 1617 / JCM 11322 / P2) (Sulfolobus solfataricus)).